We begin with the raw amino-acid sequence, 479 residues long: Pre-glycoprotein polyprotein GP complex (479 aa).

A lipid anchor (N-myristoyl glycine; by host) is attached at Gly-2. The Extracellular portion of the chain corresponds to 2–17; that stretch reads GQLISFFQDIPIFFEE. Residues 18–32 traverse the membrane as a helical segment; it reads ALNVALAVVTLLAII. Lys-33 is a topological domain (cytoplasmic). The chain crosses the membrane as a helical span at residues 34–53; the sequence is GIVNVWKSGILQLFVFLVLA. Extracellular-side segments run 54–58 and 59–418; these read GRSCS and FKVG…TLVD. Cys-57 is a binding site for Zn(2+). Disulfide bonds link Cys-85–Cys-221, Cys-265–Cys-278, and Cys-287–Cys-296. 5 N-linked (GlcNAc...) asparagine; by host glycosylation sites follow: Asn-88, Asn-125, Asn-174, Asn-202, and Asn-214. 5 N-linked (GlcNAc...) asparagine; by host glycosylation sites follow: Asn-314, Asn-351, Asn-359, Asn-376, and Asn-381. The cysteines at positions 350 and 371 are disulfide-linked. A helical membrane pass occupies residues 419 to 439; it reads LCFWSAIFFTTSLFLHLVGFP. The Cytoplasmic segment spans residues 440–479; that stretch reads THRHIQGDPCPLPHRLDRNGACRCGRFQKLGKQVTWKRKH. Residues His-441, His-443, Cys-449, His-453, Cys-461, Cys-463, and His-479 each coordinate Zn(2+).

The protein belongs to the arenaviridae GPC protein family. As to quaternary structure, homotetramer; disulfide-linked. In terms of assembly, homotetramer. GP2 homotetramers bind through ionic interactions with GP1 homotetramers to form the GP complex together with the stable signal peptide. The GP-C polyprotein interacts with the host protease MBTPS1/SKI-1 resulting in the polyprotein processing. In terms of processing, specific enzymatic cleavages in vivo yield mature proteins. GP-C polyprotein is cleaved in the endoplasmic reticulum by the host protease MBTPS1. Only cleaved glycoprotein is incorporated into virions. Post-translationally, the SSP remains stably associated with the GP complex following cleavage by signal peptidase and plays crucial roles in the trafficking of GP through the secretory pathway. Myristoylation is necessary for GP2-mediated fusion activity.

It is found in the virion membrane. Its subcellular location is the host endoplasmic reticulum membrane. The protein localises to the host Golgi apparatus membrane. It localises to the host cell membrane. In terms of biological role, interacts with the host receptor. Mediates virus attachment to host TFRC. This attachment induces virion internalization predominantly through clathrin-mediated endocytosis. Class I viral fusion protein that directs fusion of viral and host endosomal membranes, leading to delivery of the nucleocapsid into the cytoplasm. Membrane fusion is mediated by irreversible conformational changes induced upon acidification in the endosome. Its function is as follows. Stable signal peptide (SSP): cleaved and functions as a signal peptide. In addition, it is also retained as the third component of the GP complex. The SSP is required for efficient glycoprotein expression, post-translational maturation cleavage of GP1 and GP2, glycoprotein transport to the cell surface plasma membrane, formation of infectious virus particles, and acid pH-dependent glycoprotein-mediated cell fusion. The sequence is that of Pre-glycoprotein polyprotein GP complex from Homo sapiens (Human).